The primary structure comprises 154 residues: Anaerobic ribonucleoside-triphosphate reductase-activating protein (154 aa).

Positions 26, 30, and 33 each coordinate [4Fe-4S] cluster. S-adenosyl-L-methionine is bound by residues glycine 32 to tyrosine 34 and glycine 74.

This sequence belongs to the organic radical-activating enzymes family. In terms of assembly, forms a tetramer composed of two NrdD and two NrdG subunits. It depends on [4Fe-4S] cluster as a cofactor.

It localises to the cytoplasm. It carries out the reaction glycyl-[protein] + reduced [flavodoxin] + S-adenosyl-L-methionine = glycin-2-yl radical-[protein] + semiquinone [flavodoxin] + 5'-deoxyadenosine + L-methionine + H(+). Its function is as follows. Activation of anaerobic ribonucleoside-triphosphate reductase under anaerobic conditions by generation of an organic free radical, using S-adenosylmethionine and reduced flavodoxin as cosubstrates to produce 5'-deoxy-adenosine. The chain is Anaerobic ribonucleoside-triphosphate reductase-activating protein (nrdG) from Salmonella typhimurium (strain LT2 / SGSC1412 / ATCC 700720).